The primary structure comprises 257 residues: Receptor expression-enhancing protein 4 (257 aa).

2 consecutive transmembrane segments (helical) span residues 1–21 (MVSWMICRLVVLIFGMLYPAY) and 42–62 (WIVFAIFMAAETFTDIFISWF). Phosphoserine is present on residues serine 152 and serine 194. Residues 159 to 257 (IPDTSAPTYQ…KKTIPSDLDS (99 aa)) form a disordered region. A Phosphothreonine modification is found at threonine 196. Residue serine 202 is modified to Phosphoserine. At threonine 250 the chain carries Phosphothreonine. Serine 253 is modified (phosphoserine).

This sequence belongs to the DP1 family.

It localises to the endoplasmic reticulum membrane. Its function is as follows. Microtubule-binding protein required to ensure proper cell division and nuclear envelope reassembly by sequestering the endoplasmic reticulum away from chromosomes during mitosis. Probably acts by clearing the endoplasmic reticulum membrane from metaphase chromosomes. This chain is Receptor expression-enhancing protein 4 (Reep4), found in Rattus norvegicus (Rat).